The primary structure comprises 648 residues: Transmembrane 9 superfamily member 8 (648 aa).

Positions 1-33 (MAMEFLRSSRRILESSGCAIALIFLLFIHGAHS) are cleaved as a signal peptide. Topologically, residues 34-285 (FYLPGVAPQD…YLLMSDNQIH (252 aa)) are lumenal. Residues 286 to 306 (WFSIVNSLMIVLFLSGMVAMI) form a helical membrane-spanning segment. The Cytoplasmic segment spans residues 307 to 355 (MLRTLYRDISRYNELETQEEAQEETGWKLVHGDVFRLPTNSDLLCVYVG). A helical transmembrane segment spans residues 356–376 (TGVQCLGMVFVTMIFAMLGFL). Residues 377 to 381 (SPSNR) lie on the Lumenal side of the membrane. A helical membrane pass occupies residues 382-402 (GGLMTAMLLLWVFMGLFAGYA). Over 403–422 (SSRLYKMFKGTEWKRIAFRT) the chain is Cytoplasmic. A helical membrane pass occupies residues 423-443 (AFLFPAVVSAIFFVLNALIWG). Topologically, residues 444–455 (QKSSGAVPFGTM) are lumenal. A helical transmembrane segment spans residues 456-476 (FALIFLWFGISVPLVFVGGYI). Residues 477–506 (GFKKPAADDPVKTNKIPRQIPEQAWYMNPV) lie on the Cytoplasmic side of the membrane. A helical transmembrane segment spans residues 507 to 527 (FSILIGGILPFGAVFIELFFI). At 528 to 538 (LTSIWLNQFYY) the chain is on the lumenal side. Residues 539–559 (IFGFLFLVFVILIVTCAEITV) traverse the membrane as a helical segment. At 560–577 (VLCYFQLCSEDYLWWWRS) the chain is on the cytoplasmic side. The chain crosses the membrane as a helical span at residues 578–598 (YLTSGSSALYLFLYATFYFFT). Over 599-604 (KLQITK) the chain is Lumenal. The chain crosses the membrane as a helical span at residues 605–625 (LVSAMLYFGYMLIASYAFFVL). Over 626-648 (TGTIGFYACLWFTRLIYSSVKID) the chain is Cytoplasmic. The short motif at 637–642 (FTRLIY) is the Endoplasmic reticulum export signal element. The Golgi retention signal motif lies at 646–648 (KID).

Belongs to the nonaspanin (TM9SF) (TC 9.A.2) family.

Its subcellular location is the endosome membrane. It is found in the golgi apparatus membrane. In Arabidopsis thaliana (Mouse-ear cress), this protein is Transmembrane 9 superfamily member 8.